The following is a 709-amino-acid chain: Phosphoprotein (709 aa).

Positions 1–35 are N0 binding; the sequence is MDKLELVNDGLNIIDFIQKNQKEIQKTYGRSSIQQ. A disordered region spans residues 53–92; it reads SGESEQVEGGMSKDDGDVERRNLEDLSSTSPTDGTIGKRV. Over residues 63-76 the composition is skewed to basic and acidic residues; the sequence is MSKDDGDVERRNLE. The segment at 110–140 is interaction with host STAT1; it reads VVTDVVYHDHGGECTGYGFTSSPERGWSDYT. S257 is modified (phosphoserine; by host). Positions 265–324 are disordered; that stretch reads ISPEDEEPSSVGGKPNESIGRTIEGQSIRDNLQAKDNKSTDVPGAGPKDSAVKEEPPQKR. S350 is modified (phosphoserine; by host). Residues 384–473 are disordered; it reads VQTADRQRPG…VNPVDDNDSL (90 aa). Polar residues-rich tracts occupy residues 416–426 and 444–456; these read GTENVPGSKSG and NAEN…STAV. Positions 475–580 are multimerization; that stretch reads DKYIMPSDDF…LVSMMIMIPG (106 aa).

Homotetramer. Interacts (via multimerization domain) with polymerase L; this interaction forms the polymerase L-P complex. Interacts (via N-terminus) with N0 (via Ncore); this interaction allows P to chaperon N0 to avoid N polymerization before encapsidation. Interacts (via C-terminus) with N-RNA template (via C-terminus); this interaction positions the polymerase on the template for both transcription and replication. Interacts with host STAT1.

The protein localises to the virion. It is found in the host cytoplasm. Functionally, essential cofactor of the RNA polymerase L that plays a central role in the transcription and replication by forming the polymerase complex with RNA polymerase L and recruiting L to the genomic N-RNA template for RNA synthesis. Also plays a central role in the encapsidation of nascent RNA chains by forming the encapsidation complex with the nucleocapsid protein N (N-P complex). Acts as a chaperone for newly synthesized free N protein, so-called N0, allowing encapsidation of nascent RNA chains during replication. The nucleoprotein protein N prevents excessive phosphorylation of P, which leads to down-regulation of viral transcription/ replication. Participates, together with N, in the formation of viral factories (viroplasms), which are large inclusions in the host cytoplasm where replication takes place. This chain is Phosphoprotein (P/V/C), found in Nipah virus.